We begin with the raw amino-acid sequence, 196 residues long: Ribonuclease HII (196 aa).

The region spanning 15-196 (FILAGIDEAG…RLSFTKALYK (182 aa)) is the RNase H type-2 domain. Residues aspartate 21, glutamate 22, and aspartate 112 each coordinate a divalent metal cation.

The protein belongs to the RNase HII family. Mn(2+) serves as cofactor. It depends on Mg(2+) as a cofactor.

It localises to the cytoplasm. It catalyses the reaction Endonucleolytic cleavage to 5'-phosphomonoester.. In terms of biological role, endonuclease that specifically degrades the RNA of RNA-DNA hybrids. This chain is Ribonuclease HII, found in Rickettsia bellii (strain OSU 85-389).